Reading from the N-terminus, the 37-residue chain is uncharacterized protein (37 aa).

An N-terminal signal peptide occupies residues 1-23; it reads MLNFSLCLYPVFILNKLVLRTQS.

It belongs to the orthopoxviruses VACWR204.5 protein family.

This is an uncharacterized protein from Vaccinia virus (strain Western Reserve) (VACV).